A 507-amino-acid chain; its full sequence is Ribose import ATP-binding protein RbsA (507 aa).

ABC transporter domains lie at 7–242 (LEMR…VGRP) and 253–497 (IPLG…TGVT). 39-46 (GENGAGKS) contacts ATP.

This sequence belongs to the ABC transporter superfamily. Ribose importer (TC 3.A.1.2.1) family. As to quaternary structure, the complex is composed of an ATP-binding protein (RbsA), two transmembrane proteins (RbsC) and a solute-binding protein (RbsB).

It localises to the cell inner membrane. It catalyses the reaction D-ribose(out) + ATP + H2O = D-ribose(in) + ADP + phosphate + H(+). Part of the ABC transporter complex RbsABC involved in ribose import. Responsible for energy coupling to the transport system. The protein is Ribose import ATP-binding protein RbsA of Yersinia pestis bv. Antiqua (strain Antiqua).